A 644-amino-acid chain; its full sequence is Exoribonuclease 2 (644 aa).

Positions 189–516 (REDLTALNFV…NHRLLKAIIA (328 aa)) constitute an RNB domain. Residues 561-643 (DERFNAEIID…ETRSVIARPA (83 aa)) form the S1 motif domain.

It belongs to the RNR ribonuclease family. RNase II subfamily.

The protein resides in the cytoplasm. The catalysed reaction is Exonucleolytic cleavage in the 3'- to 5'-direction to yield nucleoside 5'-phosphates.. Involved in mRNA degradation. Hydrolyzes single-stranded polyribonucleotides processively in the 3' to 5' direction. In Serratia proteamaculans (strain 568), this protein is Exoribonuclease 2.